The sequence spans 305 residues: MIVQPSAVAKGWPIATTLLPASCGPADPKPEPKPKQRRLCRKVFPLRARCGALAHCPIPGKNEIFTNVNHSHISIPSPRLLLVEDDPRLREDLDAHFRRRGFRVTVCGDGSHGLEAAGREAFDLVLLDIMLPGLDGLALLESLRREQATPVMLMSALGAEQDRISGFTRGADDYLPKPFSLAELDARTDALLRRVRLDRLPLAQRRDTRLVFDDQAQDVLHQGLPAGLTPSEYRLLATLREHAGEALSKPFLYRSVLHRSYTRLDRGLDVHVCNLRRKLAVVAVRHLQIQAVRGQGYLLVETEHP.

Positions 79 to 192 (RLLLVEDDPR…ELDARTDALL (114 aa)) constitute a Response regulatory domain. Aspartate 128 is subject to 4-aspartylphosphate. The segment at residues 200–301 (LPLAQRRDTR…VRGQGYLLVE (102 aa)) is a DNA-binding region (ompR/PhoB-type).

Post-translationally, phosphorylated by PfeS.

It is found in the cytoplasm. Its function is as follows. Member of the two-component regulatory system PfeR/PfeS. Activates expression of the ferric enterobactin receptor. The protein is Transcriptional activator protein PfeR (pfeR) of Pseudomonas aeruginosa (strain ATCC 15692 / DSM 22644 / CIP 104116 / JCM 14847 / LMG 12228 / 1C / PRS 101 / PAO1).